The chain runs to 361 residues: N-methyltransferase benX (361 aa).

The protein belongs to the methyltransferase superfamily.

It functions in the pathway secondary metabolite biosynthesis. Functionally, N-methyltransferase; part of the gene cluster that mediates the biosynthesis of benzomalvin A and D. The pathway begins with the loading of amino acid precursors onto the A domains of the non ribosomal peptide synthetases benY and benZ. BenY and the A1 domain of benZ are loaded with anthranilate (Anth), while the A2 domain of benZ is loaded with phenylalanine (Phe). N-methylation of Phe by the methyltransferase benX may happen before loading of Phe onto benZ, after loading of Phe, or after dipeptide formation. Condensation of Anth with the secondary amine of NmPhe or Phe is catalyzed by the C1 domain of benZ, forming a dipeptide intermediate. This is followed by in trans condensation of the Anth-NmPhe dipeptide with Anth bound to the T domain of benY by the C2 domain of benZ to form the linear tripeptide Anth-NmPhe-Anth. Cyclization and release of the tripeptide is then catalyzed by the C-terminal C domain of benY and the resulting 11-member macrocyclic intermediate is expected to spontaneously collapse to form the benzodiazepine core. Benzomalvin A is in conformational equilibrium with its atropisomer, benzomalvin D. The polypeptide is N-methyltransferase benX (Aspergillus terreus).